We begin with the raw amino-acid sequence, 434 residues long: Nicotinate phosphoribosyltransferase (434 aa).

The residue at position 242 (His-242) is a Phosphohistidine; by autocatalysis.

It belongs to the NAPRTase family. Transiently phosphorylated on a His residue during the reaction cycle. Phosphorylation strongly increases the affinity for substrates and increases the rate of nicotinate D-ribonucleotide production. Dephosphorylation regenerates the low-affinity form of the enzyme, leading to product release.

It catalyses the reaction nicotinate + 5-phospho-alpha-D-ribose 1-diphosphate + ATP + H2O = nicotinate beta-D-ribonucleotide + ADP + phosphate + diphosphate. The protein operates within cofactor biosynthesis; NAD(+) biosynthesis; nicotinate D-ribonucleotide from nicotinate: step 1/1. Catalyzes the synthesis of beta-nicotinate D-ribonucleotide from nicotinate and 5-phospho-D-ribose 1-phosphate at the expense of ATP. This Brucella abortus (strain S19) protein is Nicotinate phosphoribosyltransferase.